A 945-amino-acid chain; its full sequence is Microtubule cross-linking factor 3 (945 aa).

3 stretches are compositionally biased toward low complexity: residues 1-23 (MSQP…AAAT), 72-93 (QQQL…TSGT), and 110-126 (PKGA…GAEG). Residues 1–25 (MSQPPSGGAAPAATSASAAAAATEA) form the signal peptide. 4 disordered regions span residues 1–250 (MSQP…SYWK), 265–293 (KERA…PVAG), 307–366 (SPMA…TLKN), and 494–522 (LSLK…DNED). Over residues 141-151 (GQPEEAPREIE) the composition is skewed to basic and acidic residues. Gly residues predominate over residues 164 to 179 (GGVGGGGEGGGAGGGP). The segment covering 219-235 (TAATSKTPGPGSRNSGS) has biased composition (low complexity). A compositionally biased stretch (gly residues) spans 236 to 247 (GSTGSGSGGGGS). Positions 328 to 345 (AMQAAAPPSSQPHSQQLQ) are enriched in low complexity. Positions 340-724 (HSQQLQEQED…GKVMQLQYEN (385 aa)) form a coiled coil. Basic and acidic residues-rich tracts occupy residues 353–366 (EMEK…TLKN) and 494–511 (LSLK…EKKA). At Ser-567 the chain carries Phosphoserine. Residues 741–811 (GIRGSPRDSD…PWPKSFSDRQ (71 aa)) are disordered. Basic and acidic residues predominate over residues 745–766 (SPRDSDAESDAGKKESDDDSRP). Ser-779 is subject to Phosphoserine. Residues 809-833 (DRQQMKDIRSEAERLGKTIDRLIAD) are a coiled coil. Residues 913 to 933 (PIILLILILVLFSSLSYTTIF) form a helical membrane-spanning segment.

This sequence belongs to the MTCL family.

It localises to the membrane. This chain is Microtubule cross-linking factor 3 (Mtcl3), found in Mus musculus (Mouse).